Consider the following 273-residue polypeptide: Spore development regulator vosA (273 aa).

Residues 66–75 (STTQELQSTQ) show a composition bias toward low complexity. The segment at 66–86 (STTQELQSTQPIAVRQQPRAA) is disordered. One can recognise a Velvet domain in the interval 70–253 (ELQSTQPIAV…KEQGCIISIK (184 aa)). The Nuclear localization signal signature appears at 211 to 218 (FPTLTEIK). Basic and acidic residues predominate over residues 254–267 (KGNERARPRGADGR). The interval 254-273 (KGNERARPRGADGRSDDEDD) is disordered.

This sequence belongs to the velvet family. VosA subfamily. Forms a heterodimeric complex with velB; the formation of the velB-vosA complex is light-dependent.

The protein resides in the nucleus. In terms of biological role, component of the velB-vosA heterodimeric complex that plays a dual role in activating genes associated with spore maturation and repressing certain development-associated genes. The complex binds DNA through the DNA-binding domain of vosA that recognizes an 11-nucleotide consensus sequence 5'-CTGGCCGCGGC-3' consisting of two motifs in the promoters of key developmental regulatory genes. Positively regulates the expression of wetA and represses abaA and brlA. Acts as a crucial regulator of both conidiation capacity and conidial quality. Responsible for the synthesis and accumulation of intracellular trehalose. The polypeptide is Spore development regulator vosA (Beauveria bassiana (strain ARSEF 2860) (White muscardine disease fungus)).